Consider the following 211-residue polypeptide: Large ribosomal subunit protein uL3 (211 aa).

Residues 135–155 (THGNSLSHRAPGSIGQNQSPG) form a disordered region. At Gln-152 the chain carries N5-methylglutamine.

Belongs to the universal ribosomal protein uL3 family. In terms of assembly, part of the 50S ribosomal subunit. Forms a cluster with proteins L14 and L19. Post-translationally, methylated by PrmB.

Functionally, one of the primary rRNA binding proteins, it binds directly near the 3'-end of the 23S rRNA, where it nucleates assembly of the 50S subunit. This chain is Large ribosomal subunit protein uL3, found in Pseudoalteromonas translucida (strain TAC 125).